A 213-amino-acid chain; its full sequence is Orotidine 5'-phosphate decarboxylase (213 aa).

Residues aspartate 11, lysine 33, 61 to 70 (DLKLADIPNT), serine 113, 166 to 176 (PGVGAQGGKAS), glycine 189, and arginine 190 each bind substrate. Lysine 63 acts as the Proton donor in catalysis.

Belongs to the OMP decarboxylase family. Type 1 subfamily. As to quaternary structure, homodimer.

The catalysed reaction is orotidine 5'-phosphate + H(+) = UMP + CO2. It functions in the pathway pyrimidine metabolism; UMP biosynthesis via de novo pathway; UMP from orotate: step 2/2. Its function is as follows. Catalyzes the decarboxylation of orotidine 5'-monophosphate (OMP) to uridine 5'-monophosphate (UMP). This chain is Orotidine 5'-phosphate decarboxylase, found in Thermococcus kodakarensis (strain ATCC BAA-918 / JCM 12380 / KOD1) (Pyrococcus kodakaraensis (strain KOD1)).